The chain runs to 328 residues: Ketol-acid reductoisomerase (NADP(+)) (328 aa).

One can recognise a KARI N-terminal Rossmann domain in the interval 2-182 (AKIYRDGDAS…GATRAGVIET (181 aa)). NADP(+) is bound by residues 25–28 (YGIQ), Arg-48, Ser-53, and 83–86 (DMEQ). His-108 is a catalytic residue. Gly-134 is an NADP(+) binding site. The KARI C-terminal knotted domain occupies 183–328 (TFAEETETDL…AEMRKLLFGP (146 aa)). Positions 191, 195, 227, and 231 each coordinate Mg(2+). Substrate is bound at residue Ser-252.

This sequence belongs to the ketol-acid reductoisomerase family. Mg(2+) serves as cofactor.

The enzyme catalyses (2R)-2,3-dihydroxy-3-methylbutanoate + NADP(+) = (2S)-2-acetolactate + NADPH + H(+). It carries out the reaction (2R,3R)-2,3-dihydroxy-3-methylpentanoate + NADP(+) = (S)-2-ethyl-2-hydroxy-3-oxobutanoate + NADPH + H(+). It participates in amino-acid biosynthesis; L-isoleucine biosynthesis; L-isoleucine from 2-oxobutanoate: step 2/4. It functions in the pathway amino-acid biosynthesis; L-valine biosynthesis; L-valine from pyruvate: step 2/4. Involved in the biosynthesis of branched-chain amino acids (BCAA). Catalyzes an alkyl-migration followed by a ketol-acid reduction of (S)-2-acetolactate (S2AL) to yield (R)-2,3-dihydroxy-isovalerate. In the isomerase reaction, S2AL is rearranged via a Mg-dependent methyl migration to produce 3-hydroxy-3-methyl-2-ketobutyrate (HMKB). In the reductase reaction, this 2-ketoacid undergoes a metal-dependent reduction by NADPH to yield (R)-2,3-dihydroxy-isovalerate. This is Ketol-acid reductoisomerase (NADP(+)) from Pyrobaculum calidifontis (strain DSM 21063 / JCM 11548 / VA1).